Consider the following 290-residue polypeptide: 4-hydroxy-tetrahydrodipicolinate synthase (290 aa).

Thr44 is a pyruvate binding site. Tyr132 acts as the Proton donor/acceptor in catalysis. The active-site Schiff-base intermediate with substrate is the Lys160. Residue Ile202 coordinates pyruvate.

This sequence belongs to the DapA family. Homotetramer; dimer of dimers.

It is found in the cytoplasm. It carries out the reaction L-aspartate 4-semialdehyde + pyruvate = (2S,4S)-4-hydroxy-2,3,4,5-tetrahydrodipicolinate + H2O + H(+). The protein operates within amino-acid biosynthesis; L-lysine biosynthesis via DAP pathway; (S)-tetrahydrodipicolinate from L-aspartate: step 3/4. In terms of biological role, catalyzes the condensation of (S)-aspartate-beta-semialdehyde [(S)-ASA] and pyruvate to 4-hydroxy-tetrahydrodipicolinate (HTPA). The chain is 4-hydroxy-tetrahydrodipicolinate synthase from Citrifermentans bemidjiense (strain ATCC BAA-1014 / DSM 16622 / JCM 12645 / Bem) (Geobacter bemidjiensis).